Reading from the N-terminus, the 194-residue chain is RNA polymerase II subunit A C-terminal domain phosphatase SSU72 like protein 1 (194 aa).

This sequence belongs to the SSU72 phosphatase family.

The protein localises to the nucleus. The catalysed reaction is O-phospho-L-seryl-[protein] + H2O = L-seryl-[protein] + phosphate. It catalyses the reaction O-phospho-L-threonyl-[protein] + H2O = L-threonyl-[protein] + phosphate. Functionally, protein phosphatase that catalyzes the dephosphorylation of the C-terminal domain of RNA polymerase II. Plays a role in RNA processing and termination. This is RNA polymerase II subunit A C-terminal domain phosphatase SSU72 like protein 1 from Homo sapiens (Human).